We begin with the raw amino-acid sequence, 270 residues long: Zinc transporter ZupT (270 aa).

A run of 8 helical transmembrane segments spans residues 8-28 (ILVVFLLTTLAGLATGIGGFI), 40-60 (LTFALGLSGGVMVYISLVELL), 78-98 (WIAIASFFGGIAVAALIDYLV), 131-151 (ILFALAIGIHNFPEGIATFAA), 162-182 (IALAVAVHNIPEGIAVAVPLY), 192-212 (LFYSFLSGLAEPVGAAIAMFF), 216-236 (FLTPTVLAVLFASVAGIMVFI), and 250-270 (HHHISIMGIIAGMLLMAIVLI). Residues Asn-141 and Glu-144 each coordinate Fe(2+). 2 residues coordinate Zn(2+): Glu-144 and His-169. Fe(2+) contacts are provided by Asn-170, Glu-173, and Glu-202. Glu-173 lines the Zn(2+) pocket.

Belongs to the ZIP transporter (TC 2.A.5) family. ZupT subfamily.

The protein localises to the cell membrane. The catalysed reaction is Zn(2+)(in) = Zn(2+)(out). In terms of biological role, mediates zinc uptake. May also transport other divalent cations. The polypeptide is Zinc transporter ZupT (Akkermansia muciniphila (strain ATCC BAA-835 / DSM 22959 / JCM 33894 / BCRC 81048 / CCUG 64013 / CIP 107961 / Muc)).